Here is a 164-residue protein sequence, read N- to C-terminus: HTH-type transcriptional regulator PapX (164 aa).

One can recognise an HTH marR-type domain in the interval 25–159 (EHLLMQLCIR…FEVISKKLLA (135 aa)).

The protein localises to the cytoplasm. This chain is HTH-type transcriptional regulator PapX (papX), found in Escherichia coli.